Reading from the N-terminus, the 201-residue chain is Histidinol dehydrogenase (201 aa).

It belongs to the histidinol dehydrogenase family. In terms of assembly, homodimer. It depends on Zn(2+) as a cofactor.

It carries out the reaction L-histidinol + 2 NAD(+) + H2O = L-histidine + 2 NADH + 3 H(+). It functions in the pathway amino-acid biosynthesis; L-histidine biosynthesis; L-histidine from 5-phospho-alpha-D-ribose 1-diphosphate: step 9/9. Its function is as follows. Catalyzes the sequential NAD-dependent oxidations of L-histidinol to L-histidinaldehyde and then to L-histidine. This is Histidinol dehydrogenase (hisD) from Buchnera aphidicola subsp. Melaphis rhois.